Consider the following 118-residue polypeptide: Vacuolar ATPase assembly integral membrane protein vma-21 (118 aa).

The Cytoplasmic segment spans residues 1–35; the sequence is MATRRIISQEKTLLEKDDRIGSSPAASEKSNITPA. A helical transmembrane segment spans residues 36–56; it reads VPASVIIKLLAFTFAMIVIPI. Topologically, residues 57-73 are lumenal; the sequence is SSYFLTVDRLFKGNSTY. The helical transmembrane segment at 74–94 threads the bilayer; that stretch reads AGATAAIMANVVLIGYIIVAM. Residues 95–118 are Cytoplasmic-facing; that stretch reads AEDQSDQENEKKGGGGKGEGKKDL. The segment at 98 to 118 is disordered; sequence QSDQENEKKGGGGKGEGKKDL. The segment covering 102–118 has biased composition (basic and acidic residues); it reads ENEKKGGGGKGEGKKDL. The Prevents secretion from ER signature appears at 115-118; that stretch reads KKDL.

The protein belongs to the VMA21 family.

It localises to the endoplasmic reticulum membrane. It is found in the endoplasmic reticulum-Golgi intermediate compartment membrane. The protein localises to the cytoplasmic vesicle. The protein resides in the COPII-coated vesicle membrane. In terms of biological role, required for the assembly of the V0 complex of the vacuolar ATPase (V-ATPase) in the endoplasmic reticulum. This Neurospora crassa (strain ATCC 24698 / 74-OR23-1A / CBS 708.71 / DSM 1257 / FGSC 987) protein is Vacuolar ATPase assembly integral membrane protein vma-21 (vma-21).